The following is a 79-amino-acid chain: Small ribosomal subunit protein bS18 (79 aa).

In terms of assembly, part of the 30S ribosomal subunit. Forms a tight heterodimer with protein bS6. Both N-terminus methionine truncation and retention have been observed for this protein. Post-translationally, may be methylated up to 6 times, on undetermined residues.

Functionally, binds as a heterodimer with protein bS6 to the central domain of the 16S rRNA, where it helps stabilize the platform of the 30S subunit. This chain is Small ribosomal subunit protein bS18, found in Rhodopseudomonas palustris (strain ATCC BAA-98 / CGA009).